Here is a 308-residue protein sequence, read N- to C-terminus: MVLGRGLLGRRSLAALGAACARRGLGPALLGVLHHTDLRKNLTVDEGTMKVEVLPALTDNYMYLVIDDETKEAAIVDPVQPQKVLDAARKHGVKLTTVLTTHHHWDHAGGNEKLVKLQSGLKVYGGDDRIGALTHKITHLSTLQVGSLNVKCLATPCHTSGHICYFVSRPGGSEPPAVFTGDTLFVAGCGKFYEGTADEMCKALLEVLGRLPPDTRVYCGHEYTINNLKFARHVEPGNAAIQEKLAWAKEKYSIGEPTVPSTLAEEFTYNPFMRVREKTVQQHARETDPVTTMRAVRKEKDEFKMPRD.

A mitochondrion-targeting transit peptide spans 1–13 (MVLGRGLLGRRSL). 4 residues coordinate Zn(2+): H102, H104, D106, and H107. K116 bears the N6-acetyllysine mark. Positions 158 and 182 each coordinate Zn(2+). Substrate-binding positions include 191-193 (KFY) and 221-223 (HEY). H221 is a binding site for Zn(2+). K229 carries the post-translational modification N6-acetyllysine; alternate. K229 is modified (N6-succinyllysine; alternate). 297-300 (RKEK) lines the substrate pocket.

This sequence belongs to the metallo-beta-lactamase superfamily. Glyoxalase II family. Monomer. The cofactor is Zn(2+). Testis.

Its subcellular location is the mitochondrion matrix. It localises to the cytoplasm. The catalysed reaction is an S-(2-hydroxyacyl)glutathione + H2O = a 2-hydroxy carboxylate + glutathione + H(+). It catalyses the reaction (R)-S-lactoylglutathione + H2O = (R)-lactate + glutathione + H(+). It functions in the pathway secondary metabolite metabolism; methylglyoxal degradation; (R)-lactate from methylglyoxal: step 2/2. Functionally, thiolesterase that catalyzes the hydrolysis of S-D-lactoyl-glutathione to form glutathione and D-lactic acid. In Macaca fascicularis (Crab-eating macaque), this protein is Hydroxyacylglutathione hydrolase, mitochondrial (HAGH).